Consider the following 299-residue polypeptide: uncharacterized protein (299 aa).

Residues 1–10 (MTSIIQSPPL) are compositionally biased toward polar residues. Disordered regions lie at residues 1–30 (MTSI…NNNN), 54–89 (KLNN…INNN), and 148–212 (QDYT…SDYV). Residues 56 to 89 (NNNNNNNNNNNNNNNNNNNNNNNNSSSNNNINNN) show a composition bias toward low complexity. Acidic residues-rich tracts occupy residues 150–169 (YTDE…DEEE) and 177–212 (ECEE…SDYV).

This is an uncharacterized protein from Dictyostelium discoideum (Social amoeba).